The primary structure comprises 291 residues: T-cell leukemia homeobox protein 3 (291 aa).

Positions Met1–Arg51 are disordered. Positions Arg166–Thr225 form a DNA-binding region, homeobox.

It localises to the nucleus. This is T-cell leukemia homeobox protein 3 (Tlx3) from Mus musculus (Mouse).